We begin with the raw amino-acid sequence, 264 residues long: Small ribosomal subunit protein uS2 (264 aa).

Belongs to the universal ribosomal protein uS2 family.

The protein is Small ribosomal subunit protein uS2 of Helicobacter pylori (strain Shi470).